Consider the following 317-residue polypeptide: sn-1-specific diacylglycerol lipase ABHD11 (317 aa).

A mitochondrion-targeting transit peptide spans 1–20; the sequence is MSNFAMSALCRVFTRGAPCG. One can recognise an AB hydrolase-1 domain in the interval 69–304; that stretch reads PLVFLHGLFG…ASHWIHADKP (236 aa). Residues serine 142, glutamate 238, and histidine 297 each act as charge relay system in the active site.

The protein belongs to the AB hydrolase superfamily. Post-translationally, phosphorylated.

It localises to the mitochondrion. The protein resides in the mitochondrion matrix. The catalysed reaction is 1-octadecanoyl-2-(5Z,8Z,11Z,14Z-eicosatetraenoyl)-sn-glycerol + H2O = 2-(5Z,8Z,11Z,14Z-eicosatetraenoyl)-glycerol + octadecanoate + H(+). It carries out the reaction a 1,2-diacyl-sn-glycerol + H2O = a 2-acylglycerol + a fatty acid + H(+). It catalyses the reaction a 1,3-diacyl-sn-glycerol + H2O = a 1-acyl-sn-glycerol + a fatty acid + H(+). The enzyme catalyses 1-octadecanoyl-2-(9Z-octadecenoyl)-sn-glycerol + H2O = 2-(9Z-octadecenoyl)-glycerol + octadecanoate + H(+). The catalysed reaction is 1-octadecanoyl-2-(4Z,7Z,10Z,13Z,16Z,19Z-docosahexaenoyl)-sn-glycerol + H2O = 2-(4Z,7Z,10Z,13Z,16Z,19Z-docosahexaenoyl)-glycerol + octadecanoate + H(+). It carries out the reaction 1,2-didecanoylglycerol + H2O = decanoylglycerol + decanoate + H(+). Its function is as follows. Catalyzes the hydrolysis of diacylglycerol in vitro and may function as a key regulator in lipid metabolism, namely by regulating the intracellular levels of diacylglycerol. 1,2-diacyl-sn-glycerols are the preferred substrate over 1,3-diacyl-sn-glycerols. The enzyme hydrolyzes stearate in preference to palmitate from the sn-1 position of 1,2-diacyl-sn-glycerols. The chain is sn-1-specific diacylglycerol lipase ABHD11 from Danio rerio (Zebrafish).